The chain runs to 97 residues: Large ribosomal subunit protein uL23 (97 aa).

This sequence belongs to the universal ribosomal protein uL23 family. Part of the 50S ribosomal subunit. Contacts protein L29, and trigger factor when it is bound to the ribosome.

Functionally, one of the early assembly proteins it binds 23S rRNA. One of the proteins that surrounds the polypeptide exit tunnel on the outside of the ribosome. Forms the main docking site for trigger factor binding to the ribosome. The polypeptide is Large ribosomal subunit protein uL23 (Clostridium perfringens (strain SM101 / Type A)).